Consider the following 252-residue polypeptide: Probable transcriptional regulatory protein TW504 (252 aa).

Belongs to the TACO1 family.

The protein localises to the cytoplasm. The chain is Probable transcriptional regulatory protein TW504 from Tropheryma whipplei (strain TW08/27) (Whipple's bacillus).